The primary structure comprises 178 residues: MSRIGKKPVVIPSGVTINVAAGNKVEVKGAKATLSKTFSTDVTFSVADNVATITPNNNSKNAVAQSGTARAILSNMVEGVSKGFERKLKIIGVGYRAKAQGNELNLTLGFSHPVVYKLPQGITAETPAPTEIILKGADKELLGKVASEIREYRKPEPYKGKGVRYEDEYVAKKEAKKK.

The protein belongs to the universal ribosomal protein uL6 family. As to quaternary structure, part of the 50S ribosomal subunit.

In terms of biological role, this protein binds to the 23S rRNA, and is important in its secondary structure. It is located near the subunit interface in the base of the L7/L12 stalk, and near the tRNA binding site of the peptidyltransferase center. The sequence is that of Large ribosomal subunit protein uL6 from Francisella tularensis subsp. tularensis (strain FSC 198).